We begin with the raw amino-acid sequence, 656 residues long: Exoribonuclease 2 (656 aa).

Residues 190-518 (RSDLTKTPFF…LNHRLIKSVL (329 aa)) form the RNB domain. Residues 564–649 (KWRYKAEIFD…ESGQLIGKLA (86 aa)) form the S1 motif domain.

The protein belongs to the RNR ribonuclease family. RNase II subfamily.

The protein localises to the cytoplasm. It catalyses the reaction Exonucleolytic cleavage in the 3'- to 5'-direction to yield nucleoside 5'-phosphates.. Its function is as follows. Involved in mRNA degradation. Hydrolyzes single-stranded polyribonucleotides processively in the 3' to 5' direction. This chain is Exoribonuclease 2, found in Psychromonas ingrahamii (strain DSM 17664 / CCUG 51855 / 37).